Consider the following 212-residue polypeptide: Bilin biosynthesis protein PecF (212 aa).

This sequence belongs to the CpcE/RpcE/PecE family.

In terms of biological role, an enzyme involved in the biosynthesis of bilin. The protein is Bilin biosynthesis protein PecF (pecF) of Mastigocladus laminosus (Fischerella sp.).